Reading from the N-terminus, the 343-residue chain is Small ribosomal subunit biogenesis GTPase RsgA (343 aa).

A CP-type G domain is found at His-116–Phe-275. GTP is bound by residues Asn-163–Asp-166 and Gly-217–Ser-225. Zn(2+) contacts are provided by Cys-299, Cys-304, His-306, and Cys-312.

The protein belongs to the TRAFAC class YlqF/YawG GTPase family. RsgA subfamily. In terms of assembly, monomer. Associates with 30S ribosomal subunit, binds 16S rRNA. Requires Zn(2+) as cofactor.

The protein resides in the cytoplasm. Functionally, one of several proteins that assist in the late maturation steps of the functional core of the 30S ribosomal subunit. Helps release RbfA from mature subunits. May play a role in the assembly of ribosomal proteins into the subunit. Circularly permuted GTPase that catalyzes slow GTP hydrolysis, GTPase activity is stimulated by the 30S ribosomal subunit. In Pseudomonas putida (strain ATCC 700007 / DSM 6899 / JCM 31910 / BCRC 17059 / LMG 24140 / F1), this protein is Small ribosomal subunit biogenesis GTPase RsgA.